The sequence spans 396 residues: L-lactate dehydrogenase (396 aa).

The region spanning 1–380 is the FMN hydroxy acid dehydrogenase domain; that stretch reads MIISAASDYR…TQDSLVQELS (380 aa). Residue Tyr24 participates in substrate binding. Ser106 and Gln127 together coordinate FMN. Tyr129 contacts substrate. Thr155 lines the FMN pocket. Residue Arg164 coordinates substrate. An FMN-binding site is contributed by Lys251. His275 (proton acceptor) is an active-site residue. Arg278 provides a ligand contact to substrate. 306-330 contributes to the FMN binding site; it reads DSGIRNGLDVVRMIALGADTVLLGR.

The protein belongs to the FMN-dependent alpha-hydroxy acid dehydrogenase family. FMN is required as a cofactor.

The protein localises to the cell inner membrane. It catalyses the reaction (S)-lactate + A = pyruvate + AH2. In terms of biological role, catalyzes the conversion of L-lactate to pyruvate. Is coupled to the respiratory chain. This is L-lactate dehydrogenase from Escherichia coli (strain SMS-3-5 / SECEC).